The sequence spans 561 residues: Protein NRT1/ PTR FAMILY 5.13 (561 aa).

A helical membrane pass occupies residues 78-98 (AWSGISTILPLLGAFVADAFL). Thr103 bears the Phosphothreonine mark. 10 helical membrane passes run 104–124 (IIIA…SAFL), 133–153 (SSPS…VAIG), 183–203 (FFNW…LVVV), 211–231 (WALG…LFVL), 324–344 (IPVW…MTFF), 361–381 (IPPA…VPIY), 405–425 (IGTG…VESK), 447–467 (IWWL…TLVG), 486–506 (AIYL…IYLI), and 530–550 (YFYW…LFIS).

Belongs to the major facilitator superfamily. Proton-dependent oligopeptide transporter (POT/PTR) (TC 2.A.17) family. In terms of tissue distribution, expressed in roots, flowers and siliques. Detected in stems and leaves.

The protein localises to the membrane. The polypeptide is Protein NRT1/ PTR FAMILY 5.13 (NPF5.13) (Arabidopsis thaliana (Mouse-ear cress)).